We begin with the raw amino-acid sequence, 404 residues long: Biflaviolin synthase CYP158A2 (404 aa).

Positions 288 and 293 each coordinate flaviolin. C353 contributes to the heme binding site.

It belongs to the cytochrome P450 family. It depends on heme as a cofactor.

The enzyme catalyses 2 flaviolin + 2 reduced [2Fe-2S]-[ferredoxin] + O2 + H(+) = 3,3'-biflaviolin + 2 oxidized [2Fe-2S]-[ferredoxin] + 2 H2O. It catalyses the reaction 2 flaviolin + 2 reduced [2Fe-2S]-[ferredoxin] + O2 + H(+) = 3,8'-biflaviolin + 2 oxidized [2Fe-2S]-[ferredoxin] + 2 H2O. The protein operates within pigment biosynthesis. Functionally, catalyzes oxidative C-C coupling reaction to polymerize flaviolin and form highly conjugated pigments which protect the soil bacterium from deleterious effects of UV irradiation (three isomers of biflaviolin and one triflaviolin). The polypeptide is Biflaviolin synthase CYP158A2 (Streptomyces coelicolor (strain ATCC BAA-471 / A3(2) / M145)).